The chain runs to 540 residues: IQ motif and ankyrin repeat domain-containing protein 1 (540 aa).

The span at 1-17 (MSTKKGGPKAASGKGQA) shows a compositional bias: low complexity. The interval 1 to 62 (MSTKKGGPKA…PQAPAAPTAE (62 aa)) is disordered. One can recognise an IQ domain in the interval 62–91 (EDKAAIVIQCAFRQYLARRELARRCQERQE). ANK repeat units follow at residues 191–220 (HGNTPLSEAAAGGQTMAIQLLAELGANPNT) and 224–253 (FGRTPLYRAAFGGHLEAVEELLKIGADPRM). The stretch at 281–388 (LTEAMLKNME…EETLAMARLE (108 aa)) forms a coiled coil.

The chain is IQ motif and ankyrin repeat domain-containing protein 1 from Mus musculus (Mouse).